Here is a 473-residue protein sequence, read N- to C-terminus: Arginine biosynthesis bifunctional protein ArgJ, mitochondrial (473 aa).

Positions 201, 230, 241, 328, 468, and 473 each coordinate substrate. The active-site Nucleophile is the Thr241.

It belongs to the ArgJ family. In terms of assembly, heterodimer of an alpha and a beta chain. In terms of processing, the alpha and beta chains are autoproteolytically processed from a single precursor protein within the mitochondrion.

Its subcellular location is the mitochondrion matrix. It carries out the reaction N(2)-acetyl-L-ornithine + L-glutamate = N-acetyl-L-glutamate + L-ornithine. The enzyme catalyses L-glutamate + acetyl-CoA = N-acetyl-L-glutamate + CoA + H(+). It participates in amino-acid biosynthesis; L-arginine biosynthesis; L-ornithine and N-acetyl-L-glutamate from L-glutamate and N(2)-acetyl-L-ornithine (cyclic): step 1/1. Its pathway is amino-acid biosynthesis; L-arginine biosynthesis; N(2)-acetyl-L-ornithine from L-glutamate: step 1/4. Its function is as follows. Catalyzes two activities which are involved in the cyclic version of arginine biosynthesis: the synthesis of acetylglutamate from glutamate and acetyl-CoA, and of ornithine by transacetylation between acetylornithine and glutamate. In Blastomyces gilchristii (strain SLH14081) (Blastomyces dermatitidis), this protein is Arginine biosynthesis bifunctional protein ArgJ, mitochondrial.